A 280-amino-acid polypeptide reads, in one-letter code: 3-phenylpropionate-dihydrodiol/cinnamic acid-dihydrodiol dehydrogenase (280 aa).

Position 143 (Ser143) interacts with substrate. The Proton acceptor role is filled by Tyr156.

The protein belongs to the short-chain dehydrogenases/reductases (SDR) family.

The enzyme catalyses 3-(cis-5,6-dihydroxycyclohexa-1,3-dien-1-yl)propanoate + NAD(+) = 3-(2,3-dihydroxyphenyl)propanoate + NADH + H(+). It catalyses the reaction (2E)-3-(cis-5,6-dihydroxycyclohexa-1,3-dien-1-yl)prop-2-enoate + NAD(+) = (2E)-3-(2,3-dihydroxyphenyl)prop-2-enoate + NADH + H(+). Its pathway is aromatic compound metabolism; 3-phenylpropanoate degradation. Functionally, converts 3-phenylpropionate-dihydrodiol (PP-dihydrodiol) and cinnamic acid-dihydrodiol (CI-dihydrodiol) into 3-(2,3-dihydroxylphenyl)propanoic acid (DHPP) and 2,3-dihydroxicinnamic acid (DHCI), respectively. The sequence is that of 3-phenylpropionate-dihydrodiol/cinnamic acid-dihydrodiol dehydrogenase from Photorhabdus laumondii subsp. laumondii (strain DSM 15139 / CIP 105565 / TT01) (Photorhabdus luminescens subsp. laumondii).